The chain runs to 651 residues: MHLEVIVQSYKKSKYYFSHTFYLYKFIVVNSPDMLHISRLGLFLGLFAIVMHSVNLIKYTSDPLEAFKTVNRHNWSDEQREHFYDLRNLYTSFCQTNLSLDCFTQILTNVFSWDIRDSQCKSAVSLSPLQNLPRTEIKIVLSSTTANKSIIASSFSLFYLLFATLSTYTADPPCVELLPFKILGAQLFDIKLTEESLRMAMSKFSNSNLTRSLTSFTSKNFFNYTSFVYFLLYNTTSCVPSNDQYFKQSPKPINVTTSFGRAIVNFDSILTTTPSSTSASLTSPHIPSTNIPTPAPPPVTKNSTKLHTDTIKVTPNTPTITTQTTESIKKIVKRSDFPRPMYTPTDIPTLTIRLNATIKTEQNTENPKSPPKPTNFENTTIRIPKTLESATATTNATQKIESTTFTTIGIKEINGNTYSSPKNSIYLKSKSQQSTTKFTDAEHTTPILKFTTWQNTVRTYMSHNTEVQNMTDKFQRTTLKSSNELPTIQTLSVTPKQKLPSNVTAKTEVHITNNALPSSNSSYSITEVTKEVKHTRMSASTHEQINHTEIAQITPILNAHTSEKSTTPQRSFTAETFLTTSSKPNIITWSNLLTTTPKEPLTNTSLRWTDHITTQLTTSNRTQSAKLTKANISSQTTNIYPQTITGRSTEV.

A signal peptide spans 1–56 (MHLEVIVQSYKKSKYYFSHTFYLYKFIVVNSPDMLHISRLGLFLGLFAIVMHSVNL). 7 N-linked (GlcNAc...) asparagine; by host glycosylation sites follow: N74, N97, N147, N208, N223, N234, and N254. Low complexity predominate over residues 275 to 292 (SSTSASLTSPHIPSTNIP). The disordered stretch occupies residues 275 to 303 (SSTSASLTSPHIPSTNIPTPAPPPVTKNS). N-linked (GlcNAc...) asparagine; by host glycans are attached at residues N302, N355, N378, N395, N469, N502, N520, N546, N603, N620, and N631.

Belongs to the herpesviridae U47 family. Part of a gH-gL-gO complex. Post-translationally, a shorter mature protein, gO-80K, is produced probably by proteolytic cleavage. In terms of processing, modified with high mannose-oligosaccharides. N-glycosylated with complex glycans.

It is found in the virion. The protein localises to the host cell membrane. This Human herpesvirus 6A (strain Uganda-1102) (HHV-6 variant A) protein is 120 kDa Glycoprotein O (U47).